The chain runs to 305 residues: MYNGILPVYKERGLTSHDVVFKLRKILKTKKIGHTGTLDPEVAGVLPVCIGNATRVSDYVMDMGKAYEATVSIGRSTTTEDQTGDTLETKGVHSADFNKDDIDRLLESFKGIIEQIPPMYSSVKVNGKKLYEYARNNETVERPKRKVNIKDIGRISELDFKENECHFKIRVICGKGTYIRTLATDIGVKLGFPAHMSKLTRIESGGFVLKDSLTLEQIKELHEQDSLQNKLFPLEYGLKGLPSIKIKDSHIKKRILNGQKFNKNEFDNKIKDQIVFIDDDSEKVLAIYMVHPTKESEIKPKKVFN.

Residue aspartate 39 is the Nucleophile of the active site.

It belongs to the pseudouridine synthase TruB family. Type 1 subfamily.

The catalysed reaction is uridine(55) in tRNA = pseudouridine(55) in tRNA. Functionally, responsible for synthesis of pseudouridine from uracil-55 in the psi GC loop of transfer RNAs. The polypeptide is tRNA pseudouridine synthase B (Staphylococcus aureus (strain Newman)).